We begin with the raw amino-acid sequence, 389 residues long: Chalcone synthase 1 (389 aa).

C164 is an active-site residue.

It belongs to the thiolase-like superfamily. Chalcone/stilbene synthases family.

The catalysed reaction is (E)-4-coumaroyl-CoA + 3 malonyl-CoA + 3 H(+) = 2',4,4',6'-tetrahydroxychalcone + 3 CO2 + 4 CoA. Its pathway is secondary metabolite biosynthesis; flavonoid biosynthesis. Its function is as follows. The primary product of this enzyme is 4,2',4',6'-tetrahydroxychalcone (also termed naringenin-chalcone or chalcone) which can under specific conditions spontaneously isomerize into naringenin. This is Chalcone synthase 1 (CHS1) from Camellia sinensis (Tea plant).